The sequence spans 368 residues: Serine/threonine-protein kinase CAK1 (368 aa).

One can recognise a Protein kinase domain in the interval 1–368 (MKLDSIDITH…QRILQELEKP (368 aa)). The active-site Proton acceptor is D156.

It belongs to the protein kinase superfamily. CMGC Ser/Thr protein kinase family. CDC2/CDKX subfamily.

It catalyses the reaction L-seryl-[protein] + ATP = O-phospho-L-seryl-[protein] + ADP + H(+). The enzyme catalyses L-threonyl-[protein] + ATP = O-phospho-L-threonyl-[protein] + ADP + H(+). The polypeptide is Serine/threonine-protein kinase CAK1 (CAK1) (Saccharomyces cerevisiae (strain ATCC 204508 / S288c) (Baker's yeast)).